Reading from the N-terminus, the 1092-residue chain is MMDYFNELERETERLYEIARKARARGLDVSTTPEIPLAKDLAERVEGLVGPEGIARRIKELEGDRGREEVAFQIAAEIASQAVPDDDPEEREKLADQALRTALAILTEGVVAAPLEGIARVRIKENFDKSRYLAVYFAGPIRSAGGTAAALSVLIADYIRLAVGLDRYKPVEREIERYVEEVELYESEVTNLQYSPKPDEVRLAASKIPVEVTGEPTDKVEVSHRDLERVETNNIRGGALLAMVEGVIQKAPKVLKYAKQLKLEGWDWLEKFSKAPKKGEGEEKVVVKADSKYVEDIIGGRPVLAYPSEKGAFRLRYGRARNTGLAAMGVHPATMELLQFLAVGTQMKIERPGKGNCVVPVDTIDGPVVKLRNGDVIRIEDAETASRVRSEVEEILFLGDMLVAFGEFLRNNHVLMPAGWCEEWWIQTILSSPKYPGDDPLNLSYYRTRWNELEVSAGDAFRISEEYDVPLHPRYTYFYHDVTVRELNMLREWLNTSQLEDELVLELRPEKRILEILGVPHRVKDSRVVIGHDDAHALIKTLRKPLEDSSDTVEALNRVSPVRIMKKAPTYIGTRVGRPEKTKERKMRPAPHVLFPIGKYGGSRRNIPDAAKKGSITVEIGRATCPSCRVSSMQSICPSCGSRTVIGEPGKRNINLAALLKRAAENVSVRKLDEIKGVEGMISAEKFPEPLEKGILRAKNDVYTFKDATIRHDSTDLPLTHFTPREVGVSVERLRELGYTRDCYGDELEDEDQILELRVQDVVISEDCADYLVRVANFVDDLLERFYDLERFYNVKTREDLVGHLIAGLAPHTSAAVLGRIIGFTGASACYAHPYFHSAKRRNCDSDEDSVMLLLDALLNFSKSYLPSSRGGSMDAPLVLSTRIDPEEIDDESHNIDTMDMIPLEVYERSFDHPRPSEVLDVIDNVEKRLGKPEQYTGLMFSHNTSRIDEGPKVCLYKLLPTMKEKVESQITLAEKIRAVDQRSVVEGVLMSHFLPDMMGNIRAFSRQKVRCTKCNRKYRRIPLSGECRCGGNLVLTVSKGSVIKYLEISKELASRYPIDPYLMQRIEILEYGVNSLFESDRSKQSSLDVFL.

The protein belongs to the archaeal DNA polymerase II family. Heterodimer of a large subunit and a small subunit.

The enzyme catalyses DNA(n) + a 2'-deoxyribonucleoside 5'-triphosphate = DNA(n+1) + diphosphate. It catalyses the reaction Exonucleolytic cleavage in the 3'- to 5'-direction to yield nucleoside 5'-phosphates.. Functionally, possesses two activities: a DNA synthesis (polymerase) and an exonucleolytic activity that degrades single-stranded DNA in the 3'- to 5'-direction. Has a template-primer preference which is characteristic of a replicative DNA polymerase. This is DNA polymerase II large subunit (polC) from Methanothermobacter thermautotrophicus (strain ATCC 29096 / DSM 1053 / JCM 10044 / NBRC 100330 / Delta H) (Methanobacterium thermoautotrophicum).